An 882-amino-acid polypeptide reads, in one-letter code: Valine--tRNA ligase (882 aa).

Positions Pro45–His55 match the 'HIGH' region motif. Positions Lys519–Ser523 match the 'KMSKS' region motif. An ATP-binding site is contributed by Lys522. The stretch at Leu808–Lys882 forms a coiled coil.

This sequence belongs to the class-I aminoacyl-tRNA synthetase family. ValS type 1 subfamily. In terms of assembly, monomer.

Its subcellular location is the cytoplasm. It carries out the reaction tRNA(Val) + L-valine + ATP = L-valyl-tRNA(Val) + AMP + diphosphate. In terms of biological role, catalyzes the attachment of valine to tRNA(Val). As ValRS can inadvertently accommodate and process structurally similar amino acids such as threonine, to avoid such errors, it has a 'posttransfer' editing activity that hydrolyzes mischarged Thr-tRNA(Val) in a tRNA-dependent manner. The chain is Valine--tRNA ligase from Streptococcus pyogenes serotype M3 (strain ATCC BAA-595 / MGAS315).